Here is a 418-residue protein sequence, read N- to C-terminus: Inner capsid protein sigma-2 (418 aa).

This sequence belongs to the orthoreovirus sigma-1 protein family. As to quaternary structure, interacts with protein mu-NS; in viral inclusions.

Its subcellular location is the virion. Its function is as follows. Inner capsid (core) component. The protein is Inner capsid protein sigma-2 (S2) of Reovirus type 3 (strain Dearing) (T3D).